The primary structure comprises 198 residues: Nucleoside triphosphate pyrophosphatase (198 aa).

Residue Asp-72 is the Proton acceptor of the active site.

It belongs to the Maf family. A divalent metal cation is required as a cofactor.

It localises to the cytoplasm. It catalyses the reaction a ribonucleoside 5'-triphosphate + H2O = a ribonucleoside 5'-phosphate + diphosphate + H(+). The catalysed reaction is a 2'-deoxyribonucleoside 5'-triphosphate + H2O = a 2'-deoxyribonucleoside 5'-phosphate + diphosphate + H(+). Its function is as follows. Nucleoside triphosphate pyrophosphatase. May have a dual role in cell division arrest and in preventing the incorporation of modified nucleotides into cellular nucleic acids. This is Nucleoside triphosphate pyrophosphatase from Corynebacterium diphtheriae (strain ATCC 700971 / NCTC 13129 / Biotype gravis).